Consider the following 106-residue polypeptide: UPF0145 protein GSU2791 (106 aa).

The protein belongs to the UPF0145 family.

The sequence is that of UPF0145 protein GSU2791 from Geobacter sulfurreducens (strain ATCC 51573 / DSM 12127 / PCA).